The following is a 247-amino-acid chain: tRNA (guanine-N(1)-)-methyltransferase (247 aa).

Residues G117 and L136–L141 contribute to the S-adenosyl-L-methionine site.

The protein belongs to the RNA methyltransferase TrmD family. In terms of assembly, homodimer.

The protein localises to the cytoplasm. It carries out the reaction guanosine(37) in tRNA + S-adenosyl-L-methionine = N(1)-methylguanosine(37) in tRNA + S-adenosyl-L-homocysteine + H(+). In terms of biological role, specifically methylates guanosine-37 in various tRNAs. The protein is tRNA (guanine-N(1)-)-methyltransferase of Myxococcus xanthus (strain DK1622).